Here is a 234-residue protein sequence, read N- to C-terminus: Peptidyl-prolyl cis-trans isomerase FKBP17-3, chloroplastic (234 aa).

Residues 1-28 constitute a chloroplast transit peptide; sequence MATLFTATVPSHHRFVSPSQHPKQSLLS. One can recognise a PPIase FKBP-type domain in the interval 130-228; the sequence is GYLVVFDVKG…DYIIEVDTVY (99 aa).

This sequence belongs to the FKBP-type PPIase family.

It localises to the plastid. The protein localises to the chloroplast thylakoid lumen. It carries out the reaction [protein]-peptidylproline (omega=180) = [protein]-peptidylproline (omega=0). Functionally, PPIases accelerate the folding of proteins. It catalyzes the cis-trans isomerization of proline imidic peptide bonds in oligopeptides. This Arabidopsis thaliana (Mouse-ear cress) protein is Peptidyl-prolyl cis-trans isomerase FKBP17-3, chloroplastic (FKBP17-3).